Consider the following 745-residue polypeptide: Phosphoribosylformylglycinamidine synthase subunit PurL (745 aa).

His-47 is a catalytic residue. Residues Tyr-50 and Lys-90 each contribute to the ATP site. Position 92 (Glu-92) interacts with Mg(2+). Substrate contacts are provided by residues 93–96 and Arg-115; that span reads SHNH. The active-site Proton acceptor is His-94. Asp-116 is a binding site for Mg(2+). A substrate-binding site is contributed by Gln-240. Residue Asp-268 coordinates Mg(2+). 312–314 lines the substrate pocket; sequence ESQ. Residues Asn-501 and Gly-538 each coordinate ATP. Residue Asn-539 coordinates Mg(2+). Residue Ser-541 participates in substrate binding.

Belongs to the FGAMS family. As to quaternary structure, monomer. Part of the FGAM synthase complex composed of 1 PurL, 1 PurQ and 2 PurS subunits.

The protein localises to the cytoplasm. The enzyme catalyses N(2)-formyl-N(1)-(5-phospho-beta-D-ribosyl)glycinamide + L-glutamine + ATP + H2O = 2-formamido-N(1)-(5-O-phospho-beta-D-ribosyl)acetamidine + L-glutamate + ADP + phosphate + H(+). It functions in the pathway purine metabolism; IMP biosynthesis via de novo pathway; 5-amino-1-(5-phospho-D-ribosyl)imidazole from N(2)-formyl-N(1)-(5-phospho-D-ribosyl)glycinamide: step 1/2. In terms of biological role, part of the phosphoribosylformylglycinamidine synthase complex involved in the purines biosynthetic pathway. Catalyzes the ATP-dependent conversion of formylglycinamide ribonucleotide (FGAR) and glutamine to yield formylglycinamidine ribonucleotide (FGAM) and glutamate. The FGAM synthase complex is composed of three subunits. PurQ produces an ammonia molecule by converting glutamine to glutamate. PurL transfers the ammonia molecule to FGAR to form FGAM in an ATP-dependent manner. PurS interacts with PurQ and PurL and is thought to assist in the transfer of the ammonia molecule from PurQ to PurL. This chain is Phosphoribosylformylglycinamidine synthase subunit PurL, found in Leptospira borgpetersenii serovar Hardjo-bovis (strain JB197).